Here is a 246-residue protein sequence, read N- to C-terminus: 14-3-3 protein eta (246 aa).

An N-acetylglycine modification is found at G2. 2 positions are modified to phosphoserine: S25 and S59.

Belongs to the 14-3-3 family. In terms of assembly, homodimer. Interacts with many nuclear hormone receptors and cofactors including AR, ESR1, ESR2, MC2R, NR3C1, NRIP1, PPARBP and THRA. Interacts with ABL1 (phosphorylated form); the interaction retains it in the cytoplasm. Weakly interacts with CDKN1B. Interacts with ARHGEF28 and CDK16. Interacts with GAB2. Interacts with KCNK18 in a phosphorylation-dependent manner. Interacts with SAMSN1. Interacts with the 'Ser-241' phosphorylated form of PDPK1. Interacts with the 'Thr-369' phosphorylated form of DAPK2. Interacts with PI4KB, TBC1D22A and TBC1D22B. Interacts with SLITRK1. Interacts with MEFV. In terms of processing, phosphorylated on Ser-59 by protein kinase C delta type catalytic subunit in a sphingosine-dependent fashion.

Its subcellular location is the cytoplasm. Its function is as follows. Adapter protein implicated in the regulation of a large spectrum of both general and specialized signaling pathways. Binds to a large number of partners, usually by recognition of a phosphoserine or phosphothreonine motif. Binding generally results in the modulation of the activity of the binding partner. Negatively regulates the kinase activity of PDPK1. In Bos taurus (Bovine), this protein is 14-3-3 protein eta (YWHAH).